A 285-amino-acid polypeptide reads, in one-letter code: Eukaryotic translation initiation factor 3 subunit J (285 aa).

Disordered regions lie at residues 1-86 (MSWD…QLDE) and 232-285 (QARL…DDFM). Acidic residues predominate over residues 22–41 (WEDEEDDGPVLESWDVDPEE). Residues 36–81 (DVDPEEEEKKKKEAKLQEAKRKAELKAKEDAEKAKKDAKRKELEQF) are a coiled coil. Positions 42–86 (EEKKKKEAKLQEAKRKAELKAKEDAEKAKKDAKRKELEQFDQLDE) are enriched in basic and acidic residues. Acidic residues predominate over residues 269–285 (DDMDDGQFDDLDDDDFM).

Belongs to the eIF-3 subunit J family. Component of the eukaryotic translation initiation factor 3 (eIF-3) complex.

The protein resides in the cytoplasm. Component of the eukaryotic translation initiation factor 3 (eIF-3) complex, which is involved in protein synthesis of a specialized repertoire of mRNAs and, together with other initiation factors, stimulates binding of mRNA and methionyl-tRNAi to the 40S ribosome. The eIF-3 complex specifically targets and initiates translation of a subset of mRNAs involved in cell proliferation. This is Eukaryotic translation initiation factor 3 subunit J from Candida albicans (strain SC5314 / ATCC MYA-2876) (Yeast).